The primary structure comprises 61 residues: Small ribosomal subunit protein uS14 (61 aa).

The Zn(2+) site is built by cysteine 24, cysteine 27, cysteine 40, and cysteine 43.

This sequence belongs to the universal ribosomal protein uS14 family. Zinc-binding uS14 subfamily. In terms of assembly, part of the 30S ribosomal subunit. Contacts proteins S3 and S10. It depends on Zn(2+) as a cofactor.

In terms of biological role, binds 16S rRNA, required for the assembly of 30S particles and may also be responsible for determining the conformation of the 16S rRNA at the A site. This Desulforamulus reducens (strain ATCC BAA-1160 / DSM 100696 / MI-1) (Desulfotomaculum reducens) protein is Small ribosomal subunit protein uS14.